The chain runs to 257 residues: Cyclin-C1-1 (257 aa).

Belongs to the cyclin family. Cyclin C subfamily.

The protein is Cyclin-C1-1 of Oryza sativa subsp. japonica (Rice).